Here is an 86-residue protein sequence, read N- to C-terminus: Large ribosomal subunit protein bL27 (86 aa).

Residues 1 to 10 show a composition bias toward gly residues; that stretch reads MAQKKGGGST. Positions 1–21 are disordered; sequence MAQKKGGGSTRNGRDSESKRL.

It belongs to the bacterial ribosomal protein bL27 family.

This is Large ribosomal subunit protein bL27 from Cupriavidus necator (strain ATCC 17699 / DSM 428 / KCTC 22496 / NCIMB 10442 / H16 / Stanier 337) (Ralstonia eutropha).